The primary structure comprises 198 residues: Patulin synthesis protein F (198 aa).

Residues 1 to 18 (MRLSTVLLGSLLGALTQA) form the signal peptide. Residues Asn-128 and Asn-184 are each glycosylated (N-linked (GlcNAc...) asparagine).

The protein belongs to the patF family.

The protein resides in the cytoplasm. It localises to the cytosol. It catalyses the reaction phyllostine = neopatulin. It participates in mycotoxin biosynthesis; patulin biosynthesis. In terms of biological role, part of the gene cluster that mediates the biosynthesis of patulin, an acetate-derived tetraketide mycotoxin produced by several fungal species that shows antimicrobial properties against several bacteria. PatF catalyzes the conversion of phyllostine into neopatulin. The pathway begins with the synthesis of 6-methylsalicylic acid by the polyketide synthase (PKS) patK via condensation of acetate and malonate units. The 6-methylsalicylic acid decarboxylase patG then catalyzes the decarboxylation of 6-methylsalicylic acid to yield m-cresol (also known as 3-methylphenol). These first reactions occur in the cytosol. The intermediate m-cresol is then transported into the endoplasmic reticulum where the cytochrome P450 monooxygenase patH converts it to m-hydroxybenzyl alcohol, which is further converted to gentisyl alcohol by the cytochrome P450 monooxygenase patI. The oxidoreductases patJ and patO further convert gentisyl alcohol to isoepoxydon in the vacuole. PatN catalyzes then the transformation of isoepoxydon into phyllostine. The cluster protein patF is responsible for the conversion from phyllostine to neopatulin whereas the alcohol dehydrogenase patD converts neopatulin to E-ascladiol. The steps between isoepoxydon and E-ascladiol occur in the cytosol, and E-ascladiol is probably secreted to the extracellular space by one of the cluster-specific transporters patC or patM. Finally, the secreted patulin synthase patE catalyzes the conversion of E-ascladiol to patulin. The sequence is that of Patulin synthesis protein F from Aspergillus clavatus (strain ATCC 1007 / CBS 513.65 / DSM 816 / NCTC 3887 / NRRL 1 / QM 1276 / 107).